A 491-amino-acid chain; its full sequence is Aspartyl/glutamyl-tRNA(Asn/Gln) amidotransferase subunit B (491 aa).

The protein belongs to the GatB/GatE family. GatB subfamily. As to quaternary structure, heterotrimer of A, B and C subunits.

The enzyme catalyses L-glutamyl-tRNA(Gln) + L-glutamine + ATP + H2O = L-glutaminyl-tRNA(Gln) + L-glutamate + ADP + phosphate + H(+). It catalyses the reaction L-aspartyl-tRNA(Asn) + L-glutamine + ATP + H2O = L-asparaginyl-tRNA(Asn) + L-glutamate + ADP + phosphate + 2 H(+). In terms of biological role, allows the formation of correctly charged Asn-tRNA(Asn) or Gln-tRNA(Gln) through the transamidation of misacylated Asp-tRNA(Asn) or Glu-tRNA(Gln) in organisms which lack either or both of asparaginyl-tRNA or glutaminyl-tRNA synthetases. The reaction takes place in the presence of glutamine and ATP through an activated phospho-Asp-tRNA(Asn) or phospho-Glu-tRNA(Gln). The chain is Aspartyl/glutamyl-tRNA(Asn/Gln) amidotransferase subunit B from Paraburkholderia phytofirmans (strain DSM 17436 / LMG 22146 / PsJN) (Burkholderia phytofirmans).